A 2174-amino-acid chain; its full sequence is Mediator of RNA polymerase II transcription subunit 13 (2174 aa).

Residue S395 is modified to Phosphoserine. The disordered stretch occupies residues 435–477 (RNAGQQGQAPSLGQQQQILPKHKTNEKQEKSEKPQKRPLTPFH). Residues 438 to 451 (GQQGQAPSLGQQQQ) are compositionally biased toward low complexity. The segment covering 457-469 (KTNEKQEKSEKPQ) has biased composition (basic and acidic residues). 4 positions are modified to phosphoserine: S500, S504, S530, and S537. The span at 709 to 730 (FPDKKDRQNSEREAGKKHKVED) shows a compositional bias: basic and acidic residues. 3 disordered regions span residues 709-735 (FPDK…TSSV), 749-769 (SPSI…PSTS), and 787-816 (FNSD…ESKT). A compositionally biased stretch (basic and acidic residues) spans 805–815 (SDDKASCKESK). Phosphoserine is present on residues S826 and S890. The tract at residues 959–1054 (FIKEGDGSNM…ASTPSTCRPL (96 aa)) is disordered. Low complexity predominate over residues 992–1003 (PPSNSGAGILPS). Positions 1004 to 1015 (PSTPRFPTPRTP) are enriched in pro residues. S1029 is subject to Phosphoserine. The span at 1040–1053 (DLYSPASTPSTCRP) shows a compositional bias: polar residues. 2 short sequence motifs (LXXLL motif) span residues 1188-1192 (LILLL) and 1279-1283 (LRMLL). Polar residues-rich tracts occupy residues 1484-1498 (SQSL…NTGN) and 1563-1606 (SMNS…SLPT). Disordered stretches follow at residues 1484 to 1505 (SQSL…PSAT), 1557 to 1617 (SFPP…ESTM), and 2015 to 2048 (LPAS…RLLS).

This sequence belongs to the Mediator complex subunit 13 family. Component of the Mediator complex, which is composed of MED1, MED4, MED6, MED7, MED8, MED9, MED10, MED11, MED12, MED13, MED13L, MED14, MED15, MED16, MED17, MED18, MED19, MED20, MED21, MED22, MED23, MED24, MED25, MED26, MED27, MED29, MED30, MED31, CCNC, CDK8 and CDC2L6/CDK11. The MED12, MED13, CCNC and CDK8 subunits form a distinct module termed the CDK8 module. Mediator containing the CDK8 module is less active than Mediator lacking this module in supporting transcriptional activation. Individual preparations of the Mediator complex lacking one or more distinct subunits have been variously termed ARC, CRSP, DRIP, PC2, SMCC and TRAP. Ubiquitous.

It localises to the nucleus. In terms of biological role, component of the Mediator complex, a coactivator involved in the regulated transcription of nearly all RNA polymerase II-dependent genes. Mediator functions as a bridge to convey information from gene-specific regulatory proteins to the basal RNA polymerase II transcription machinery. Mediator is recruited to promoters by direct interactions with regulatory proteins and serves as a scaffold for the assembly of a functional preinitiation complex with RNA polymerase II and the general transcription factors. This chain is Mediator of RNA polymerase II transcription subunit 13, found in Homo sapiens (Human).